The primary structure comprises 332 residues: 2,3-diketo-L-gulonate reductase (332 aa).

The active-site Proton donor is H44. NAD(+) contacts are provided by residues 168–174 (ITMVDMS), 224–225 (WK), and 304–306 (GHE).

It belongs to the LDH2/MDH2 oxidoreductase family. DlgD subfamily. Homodimer.

It is found in the cytoplasm. The catalysed reaction is 3-dehydro-L-gulonate + NAD(+) = 2,3-dioxo-L-gulonate + NADH + H(+). It carries out the reaction 3-dehydro-L-gulonate + NADP(+) = 2,3-dioxo-L-gulonate + NADPH + H(+). Catalyzes the reduction of 2,3-diketo-L-gulonate in the presence of NADH, to form 3-keto-L-gulonate. The chain is 2,3-diketo-L-gulonate reductase from Escherichia coli O6:K15:H31 (strain 536 / UPEC).